The chain runs to 940 residues: Isoleucine--tRNA ligase (940 aa).

The 'HIGH' region signature appears at 58-68; it reads PYANGSIHIGH. Glu564 is an L-isoleucyl-5'-AMP binding site. Positions 605–609 match the 'KMSKS' region motif; sequence KMSKS. Lys608 contacts ATP. Residues Cys903, Cys906, Cys923, and Cys926 each coordinate Zn(2+).

Belongs to the class-I aminoacyl-tRNA synthetase family. IleS type 1 subfamily. Monomer. Zn(2+) is required as a cofactor.

The protein localises to the cytoplasm. It catalyses the reaction tRNA(Ile) + L-isoleucine + ATP = L-isoleucyl-tRNA(Ile) + AMP + diphosphate. In terms of biological role, catalyzes the attachment of isoleucine to tRNA(Ile). As IleRS can inadvertently accommodate and process structurally similar amino acids such as valine, to avoid such errors it has two additional distinct tRNA(Ile)-dependent editing activities. One activity is designated as 'pretransfer' editing and involves the hydrolysis of activated Val-AMP. The other activity is designated 'posttransfer' editing and involves deacylation of mischarged Val-tRNA(Ile). This is Isoleucine--tRNA ligase from Shewanella baltica (strain OS155 / ATCC BAA-1091).